The sequence spans 687 residues: Protein SDA1 homolog (687 aa).

Phosphoserine is present on residues serine 232, serine 234, and serine 236. A coiled-coil region spans residues 254-315; it reads KKGSKNKKKL…SCKERFEVKM (62 aa). Residues 484 to 509 form a disordered region; sequence LEKGENTEDDEDGWESASLSEEEEED. Residues 490–509 are compositionally biased toward acidic residues; the sequence is TEDDEDGWESASLSEEEEED. Position 552 is a phosphothreonine (threonine 552). 3 positions are modified to phosphoserine: serine 585, serine 589, and serine 595. Residues 604–651 form a disordered region; sequence KKPKSDKETRLATAMAGRTDRKEFVRKKTKINPFSSSTNKEKKKQKNF.

The protein belongs to the SDA1 family.

The protein resides in the nucleus. Its subcellular location is the nucleolus. Functionally, required for 60S pre-ribosomal subunits export to the cytoplasm. This chain is Protein SDA1 homolog (Sdad1), found in Mus musculus (Mouse).